Reading from the N-terminus, the 900-residue chain is 3'-5' exonuclease DinG (900 aa).

The Exonuclease domain maps to 8-161; that stretch reads VVDLETTGNQ…DEDAATTAQL (154 aa). Positions 241–496 constitute a Helicase ATP-binding domain; the sequence is TLVTKELGLT…KSIDLLEQQR (256 aa). An ATP-binding site is contributed by 276–283; it reads APLGSGKS. Residues 448–451 carry the DEAH box motif; the sequence is DEAH. The 170-residue stretch at 714 to 883 folds into the Helicase C-terminal domain; that stretch reads YVIEYVSVVE…RYRQKKGDIK (170 aa).

Belongs to the helicase family. DinG subfamily. Type 2 sub-subfamily.

3'-5' exonuclease. In Staphylococcus saprophyticus subsp. saprophyticus (strain ATCC 15305 / DSM 20229 / NCIMB 8711 / NCTC 7292 / S-41), this protein is 3'-5' exonuclease DinG.